Consider the following 337-residue polypeptide: Casein kinase I isoform alpha (337 aa).

In terms of domain architecture, Protein kinase spans 17–285 (YKLVRKIGSG…YLRQLFRILF (269 aa)). ATP is bound by residues 23–31 (IGSGSFGDI) and Lys-46. Asp-136 serves as the catalytic Proton acceptor. Positions 309–325 (AASSSGQGQQAQTPTGK) are enriched in low complexity. A disordered region spans residues 309-337 (AASSSGQGQQAQTPTGKQTDKSKSNMKGF).

The protein belongs to the protein kinase superfamily. CK1 Ser/Thr protein kinase family. Casein kinase I subfamily. In terms of processing, autophosphorylated.

Its subcellular location is the cytoplasm. It is found in the cytoskeleton. The protein resides in the microtubule organizing center. The protein localises to the centrosome. It localises to the chromosome. Its subcellular location is the centromere. It is found in the kinetochore. The protein resides in the nucleus speckle. The protein localises to the cilium basal body. It localises to the spindle. The enzyme catalyses L-seryl-[protein] + ATP = O-phospho-L-seryl-[protein] + ADP + H(+). It carries out the reaction L-threonyl-[protein] + ATP = O-phospho-L-threonyl-[protein] + ADP + H(+). Its function is as follows. Casein kinases are operationally defined by their preferential utilization of acidic proteins such as caseins as substrates. It can phosphorylate a large number of proteins. Participates in Wnt signaling. May play a role in segregating chromosomes during mitosis. May play a role in keratin cytoskeleton disassembly. The sequence is that of Casein kinase I isoform alpha (CSNK1A1) from Gallus gallus (Chicken).